The sequence spans 460 residues: 3-isopropylmalate dehydratase large subunit (460 aa).

Positions 338, 398, and 401 each coordinate [4Fe-4S] cluster.

Belongs to the aconitase/IPM isomerase family. LeuC type 1 subfamily. Heterodimer of LeuC and LeuD. It depends on [4Fe-4S] cluster as a cofactor.

The enzyme catalyses (2R,3S)-3-isopropylmalate = (2S)-2-isopropylmalate. The protein operates within amino-acid biosynthesis; L-leucine biosynthesis; L-leucine from 3-methyl-2-oxobutanoate: step 2/4. In terms of biological role, catalyzes the isomerization between 2-isopropylmalate and 3-isopropylmalate, via the formation of 2-isopropylmaleate. This is 3-isopropylmalate dehydratase large subunit from Streptococcus thermophilus (strain ATCC BAA-491 / LMD-9).